Here is a 247-residue protein sequence, read N- to C-terminus: Uridylate kinase (247 aa).

Position 18 to 21 (18 to 21) interacts with ATP; that stretch reads KLSG. Residue Gly-60 coordinates UMP. Positions 61 and 65 each coordinate ATP. Residues Asp-80 and 141 to 148 contribute to the UMP site; that span reads TGNPFFTT. ATP is bound by residues Thr-168, Tyr-174, and Asp-177.

This sequence belongs to the UMP kinase family. Homohexamer.

The protein resides in the cytoplasm. The enzyme catalyses UMP + ATP = UDP + ADP. It participates in pyrimidine metabolism; CTP biosynthesis via de novo pathway; UDP from UMP (UMPK route): step 1/1. With respect to regulation, inhibited by UTP. In terms of biological role, catalyzes the reversible phosphorylation of UMP to UDP. The sequence is that of Uridylate kinase from Stutzerimonas stutzeri (strain A1501) (Pseudomonas stutzeri).